The chain runs to 297 residues: N-acetylmuramic acid 6-phosphate etherase (297 aa).

The region spanning Ala55–Lys218 is the SIS domain. Glu83 functions as the Proton donor in the catalytic mechanism. Residue Glu114 is part of the active site.

It belongs to the GCKR-like family. MurNAc-6-P etherase subfamily. Homodimer.

It carries out the reaction N-acetyl-D-muramate 6-phosphate + H2O = N-acetyl-D-glucosamine 6-phosphate + (R)-lactate. The protein operates within amino-sugar metabolism; 1,6-anhydro-N-acetylmuramate degradation. It participates in amino-sugar metabolism; N-acetylmuramate degradation. Its pathway is cell wall biogenesis; peptidoglycan recycling. Functionally, specifically catalyzes the cleavage of the D-lactyl ether substituent of MurNAc 6-phosphate, producing GlcNAc 6-phosphate and D-lactate. Together with AnmK, is also required for the utilization of anhydro-N-acetylmuramic acid (anhMurNAc) either imported from the medium or derived from its own cell wall murein, and thus plays a role in cell wall recycling. The polypeptide is N-acetylmuramic acid 6-phosphate etherase (Salmonella typhi).